Consider the following 231-residue polypeptide: Large ribosomal subunit protein uL1 (231 aa).

The protein belongs to the universal ribosomal protein uL1 family. As to quaternary structure, part of the 50S ribosomal subunit.

Functionally, binds directly to 23S rRNA. The L1 stalk is quite mobile in the ribosome, and is involved in E site tRNA release. In terms of biological role, protein L1 is also a translational repressor protein, it controls the translation of the L11 operon by binding to its mRNA. The sequence is that of Large ribosomal subunit protein uL1 from Teredinibacter turnerae (strain ATCC 39867 / T7901).